Consider the following 104-residue polypeptide: MAAKIRREDEVIVLAGKDKGKRAKVSQVLPTGKLILEGINLVKKHQKPNPQLGVAGGIVEKEAPIQASNVAIFNSATGKADRVGFRFEDGKKVRFFKSNSELVK.

Belongs to the universal ribosomal protein uL24 family. Part of the 50S ribosomal subunit.

One of two assembly initiator proteins, it binds directly to the 5'-end of the 23S rRNA, where it nucleates assembly of the 50S subunit. Functionally, one of the proteins that surrounds the polypeptide exit tunnel on the outside of the subunit. This is Large ribosomal subunit protein uL24 from Shewanella sp. (strain W3-18-1).